Consider the following 155-residue polypeptide: Probable tellurium resistance transcriptional regulator TerW (155 aa).

Its function is as follows. Involved in tellurite resistance. TerW binds specifically to the potential promoter region of the terZABCDE operon and probably regulates expression of the genes. This chain is Probable tellurium resistance transcriptional regulator TerW, found in Escherichia coli.